Here is a 268-residue protein sequence, read N- to C-terminus: Type III pantothenate kinase (268 aa).

18-25 (DIGNTTTT) contributes to the ATP binding site. Substrate contacts are provided by residues Tyr-108 and 115–118 (GADR). Asp-117 (proton acceptor) is an active-site residue. Position 138 (Asp-138) interacts with K(+). ATP is bound at residue Thr-141. Thr-193 contributes to the substrate binding site.

The protein belongs to the type III pantothenate kinase family. As to quaternary structure, homodimer. Requires NH4(+) as cofactor. It depends on K(+) as a cofactor.

It localises to the cytoplasm. The catalysed reaction is (R)-pantothenate + ATP = (R)-4'-phosphopantothenate + ADP + H(+). It participates in cofactor biosynthesis; coenzyme A biosynthesis; CoA from (R)-pantothenate: step 1/5. Functionally, catalyzes the phosphorylation of pantothenate (Pan), the first step in CoA biosynthesis. In Chlorobaculum parvum (strain DSM 263 / NCIMB 8327) (Chlorobium vibrioforme subsp. thiosulfatophilum), this protein is Type III pantothenate kinase.